Here is a 549-residue protein sequence, read N- to C-terminus: Glucose-6-phosphate isomerase (549 aa).

Glutamate 353 functions as the Proton donor in the catalytic mechanism. Catalysis depends on residues histidine 384 and lysine 513.

This sequence belongs to the GPI family.

It localises to the cytoplasm. The enzyme catalyses alpha-D-glucose 6-phosphate = beta-D-fructose 6-phosphate. Its pathway is carbohydrate biosynthesis; gluconeogenesis. It functions in the pathway carbohydrate degradation; glycolysis; D-glyceraldehyde 3-phosphate and glycerone phosphate from D-glucose: step 2/4. Catalyzes the reversible isomerization of glucose-6-phosphate to fructose-6-phosphate. This Brucella canis (strain ATCC 23365 / NCTC 10854 / RM-666) protein is Glucose-6-phosphate isomerase.